Reading from the N-terminus, the 105-residue chain is MEKIYSKGVVLGYRRSQATQYPNISLIKIEGVVSREDSTFYLGKKVCLVSKVSKSAKNPTGHKISWGKICKTHGSSGVVQARFARNLPPKAMGAPVRVMLYPSNI.

The protein belongs to the eukaryotic ribosomal protein eL33 family.

In terms of biological role, the protein was found to bind to both initiator and elongator tRNAs and consequently was assigned to the P site or P and A site. The polypeptide is Large ribosomal subunit protein eL33 (rpl35a) (Dictyostelium discoideum (Social amoeba)).